The primary structure comprises 557 residues: Formate--tetrahydrofolate ligase (557 aa).

66–73 (TPAGEGKS) provides a ligand contact to ATP.

This sequence belongs to the formate--tetrahydrofolate ligase family.

It carries out the reaction (6S)-5,6,7,8-tetrahydrofolate + formate + ATP = (6R)-10-formyltetrahydrofolate + ADP + phosphate. It functions in the pathway one-carbon metabolism; tetrahydrofolate interconversion. This is Formate--tetrahydrofolate ligase from Lactobacillus johnsonii (strain CNCM I-12250 / La1 / NCC 533).